Consider the following 747-residue polypeptide: Sulfhydryl oxidase 1 (747 aa).

Residues 1 to 29 form the signal peptide; sequence MRRCNSGSGPPPSLLLLLLWLLAVPGANA. One can recognise a Thioredoxin domain in the interval 36–156; sequence YSPSDPLTLL…RERLIDALES (121 aa). Residues Cys70 and Cys73 each act as nucleophile in the active site. Intrachain disulfides connect Cys70-Cys73 and Cys101-Cys110. N-linked (GlcNAc...) (complex) asparagine glycosylation occurs at Asn130. N-linked (GlcNAc...) asparagine glycosylation is present at Asn243. Cys393 and Cys405 are disulfide-bonded. The ERV/ALR sulfhydryl oxidase domain maps to 396–503; that stretch reads SEPHFRGFPC…EDPQFPKVQW (108 aa). Positions 401, 408, and 412 each coordinate FAD. At Ser426 the chain carries Phosphoserine; by FAM20C. The cysteines at positions 449 and 452 are disulfide-linked. FAD is bound by residues Asp451, His455, 478-485, Lys500, and Trp503; that span reads WSSHNRVN. An intrachain disulfide couples Cys509 to Cys512. The segment at 573–633 is disordered; that stretch reads SRNSTLDPGK…HMAELQRNEQ (61 aa). A glycan (N-linked (GlcNAc...) asparagine) is linked at Asn575. Residues 621–633 show a composition bias toward basic and acidic residues; the sequence is PPEHMAELQRNEQ. A helical transmembrane segment spans residues 710-730; it reads ISLCVGLYSLSFMGLLAMYTY.

Belongs to the quiescin-sulfhydryl oxidase (QSOX) family. In terms of assembly, monomer. The cofactor is FAD. N-glycosylated. O-glycosylated on Thr and Ser residues. In terms of tissue distribution, expressed in heart, placenta, lung, liver, skeletal muscle, pancreas and very weakly in brain and kidney.

The protein localises to the golgi apparatus membrane. It is found in the secreted. It carries out the reaction 2 R'C(R)SH + O2 = R'C(R)S-S(R)CR' + H2O2. Catalyzes the oxidation of sulfhydryl groups in peptide and protein thiols to disulfides with the reduction of oxygen to hydrogen peroxide. Plays a role in disulfide bond formation in a variety of extracellular proteins. In fibroblasts, required for normal incorporation of laminin into the extracellular matrix, and thereby for normal cell-cell adhesion and cell migration. This chain is Sulfhydryl oxidase 1 (QSOX1), found in Homo sapiens (Human).